The primary structure comprises 206 residues: Twist-related protein 1 (206 aa).

Residues 1–18 (MMQDVSSSPVSPADDSLS) are compositionally biased toward low complexity. The tract at residues 1–109 (MMQDVSSSPV…GGGSPQSYEE (109 aa)) is disordered. A compositionally biased stretch (basic residues) spans 34-43 (RGARKRRSSR). Composition is skewed to gly residues over residues 48-65 (GSAG…GGDE) and 78-103 (SAGG…GGGS). Residues 112-163 (TQRVMANVRERQRTQSLNEAFAALRKIIPTLPSDKLSKIQTLKLAARYIDFL) enclose the bHLH domain. Residues 165 to 195 (QVLQSDELDSKMASCSYVAHERLSYAFSVWR) form a sufficient for transactivation activity region.

As to quaternary structure, efficient DNA binding requires dimerization with another bHLH protein. Homodimer or heterodimer with E proteins such as TCF3. ID1 binds preferentially to TCF3 but does not interact efficiently with TWIST1 so ID1 levels control the amount of TCF3 available to dimerize with TWIST1 and thus determine the type of dimer formed. Subset of mesodermal cells.

The protein localises to the nucleus. In terms of biological role, acts as a transcriptional regulator. Inhibits myogenesis by sequestrating E proteins, inhibiting trans-activation by MEF2, and inhibiting DNA-binding by MYOD1 through physical interaction. This interaction probably involves the basic domains of both proteins. Also represses expression of pro-inflammatory cytokines such as TNFA and IL1B. Regulates cranial suture patterning and fusion. Activates transcription as a heterodimer with E proteins. Regulates gene expression differentially, depending on dimer composition. Homodimers induce expression of FGFR2 and POSTN while heterodimers repress FGFR2 and POSTN expression and induce THBS1 expression. Heterodimerization is also required for osteoblast differentiation. Represses the activity of the circadian transcriptional activator: NPAS2-BMAL1 heterodimer. The protein is Twist-related protein 1 (Twist1) of Mus musculus (Mouse).